A 428-amino-acid polypeptide reads, in one-letter code: GTPase Obg (428 aa).

The Obg domain maps to 1–158; that stretch reads MFVDQTKIDV…RTLRLELKVL (158 aa). The region spanning 159–328 is the OBG-type G domain; it reads ADVGLVGFPS…LMGKTADLVE (170 aa). GTP-binding positions include 165–172, 190–194, 212–215, 282–285, and 309–311; these read GFPSVGKS, FTTLT, DLPG, TQMD, and SSV. Positions 172 and 192 each coordinate Mg(2+). An OCT domain is found at 350–428; the sequence is YKKPEDEGFK…IADFTFEFVD (79 aa).

Belongs to the TRAFAC class OBG-HflX-like GTPase superfamily. OBG GTPase family. Monomer. It depends on Mg(2+) as a cofactor.

Its subcellular location is the cytoplasm. Functionally, an essential GTPase which binds GTP, GDP and possibly (p)ppGpp with moderate affinity, with high nucleotide exchange rates and a fairly low GTP hydrolysis rate. Plays a role in control of the cell cycle, stress response, ribosome biogenesis and in those bacteria that undergo differentiation, in morphogenesis control. This chain is GTPase Obg, found in Lactobacillus johnsonii (strain CNCM I-12250 / La1 / NCC 533).